Here is a 500-residue protein sequence, read N- to C-terminus: Glycerol kinase (500 aa).

Thr12 serves as a coordination point for ADP. ATP-binding residues include Thr12, Thr13, and Ser14. Thr12 lines the sn-glycerol 3-phosphate pocket. Arg16 contacts ADP. Sn-glycerol 3-phosphate-binding residues include Arg82, Glu83, Tyr134, and Asp243. Residues Arg82, Glu83, Tyr134, Asp243, and Gln244 each contribute to the glycerol site. ADP is bound by residues Thr265 and Gly308. 4 residues coordinate ATP: Thr265, Gly308, Gln312, and Gly411. Gly411 is an ADP binding site.

Belongs to the FGGY kinase family.

It catalyses the reaction glycerol + ATP = sn-glycerol 3-phosphate + ADP + H(+). Its pathway is polyol metabolism; glycerol degradation via glycerol kinase pathway; sn-glycerol 3-phosphate from glycerol: step 1/1. Inhibited by fructose 1,6-bisphosphate (FBP). In terms of biological role, key enzyme in the regulation of glycerol uptake and metabolism. Catalyzes the phosphorylation of glycerol to yield sn-glycerol 3-phosphate. In Chelativorans sp. (strain BNC1), this protein is Glycerol kinase.